We begin with the raw amino-acid sequence, 84 residues long: Toxin Cex12 (84 aa).

The N-terminal stretch at M1–A19 is a signal peptide. Positions N20–R83 constitute an LCN-type CS-alpha/beta domain. 4 disulfides stabilise this stretch: C31–C82, C35–C58, C44–C63, and C48–C65.

This sequence belongs to the long (4 C-C) scorpion toxin superfamily. Sodium channel inhibitor family. Beta subfamily. In terms of tissue distribution, expressed by the venom gland.

Its subcellular location is the secreted. Beta toxins bind voltage-independently at site-4 of sodium channels (Nav) and shift the voltage of activation toward more negative potentials thereby affecting sodium channel activation and promoting spontaneous and repetitive firing. This chain is Toxin Cex12, found in Centruroides exilicauda (Bark scorpion).